Reading from the N-terminus, the 809-residue chain is Ferric-pyoverdine BN7/BN8 receptor (809 aa).

The first 45 residues, 1 to 45 (MNHTARKRQGWQRSVSQKLAGAVVQGIACMGASAPLLLMPAWATA), serve as a signal peptide directing secretion. In terms of domain architecture, TBDR plug spans 166–273 (TPRETPQSLT…PSATINLIRK (108 aa)). Positions 278–809 (EAQASITGEA…NVMTSFKYSF (532 aa)) constitute a TBDR beta-barrel domain. Residues 792-809 (YGVYGTPRNVMTSFKYSF) carry the TonB C-terminal box motif.

Belongs to the TonB-dependent receptor family.

The protein resides in the cell outer membrane. Its function is as follows. Specific receptor for the siderophores ferric pyoverdines (pseudobactins) BN8 and BN7, iron chelating molecules that allow the organism to extract iron from the environment, especially under iron-restricted conditions. This Pseudomonas putida (Arthrobacter siderocapsulatus) protein is Ferric-pyoverdine BN7/BN8 receptor (pupB).